The sequence spans 249 residues: Olfactory receptor 1571 (249 aa).

The helical transmembrane segment at 1–9 (LLMCNLCFA) threads the bilayer. Residues 10-40 (DICFTSASIPTNLVNIQTKNKVITYEGCISQ) are Extracellular-facing. Cys37 and Cys119 are oxidised to a cystine. A helical transmembrane segment spans residues 41–60 (VYFFILFGVLDNFLLAVMAY). The Cytoplasmic portion of the chain corresponds to 61–82 (DRYVAICHPLHYTVIMNRRLCG). The helical transmembrane segment at 83–103 (LLVLGSWVTTALNSLLQSSMA) threads the bilayer. Over 104-136 (LRLSFCTDLKIPHFVCELNQLVLLACNDTFPND) the chain is Extracellular. A glycan (N-linked (GlcNAc...) asparagine) is linked at Asn130. Residues 137–158 (MVMYFAAVLLGGGPLAGILYSY) form a helical membrane-spanning segment. At 159–180 (SKIVSSIRAISSSQGKYKAFST) the chain is on the cytoplasmic side. Residues 181 to 200 (CASHLSVVSLFYSTLLGVYL) form a helical membrane-spanning segment. The Extracellular portion of the chain corresponds to 201–210 (SSSFTQNSHS). A helical membrane pass occupies residues 211–232 (TARASVMYSVVTPMLNPFIYSL). At 233 to 249 (RNKDLMGALRRLFRRKP) the chain is on the cytoplasmic side.

This sequence belongs to the G-protein coupled receptor 1 family. As to expression, tongue specific.

The protein localises to the cell membrane. Functionally, possible taste receptor. The protein is Olfactory receptor 1571 (Olr1571) of Rattus norvegicus (Rat).